A 136-amino-acid chain; its full sequence is Nucleoside diphosphate kinase (136 aa).

Residues Lys-10, Phe-58, Arg-86, Thr-92, Arg-104, and Asn-114 each coordinate ATP. Residue His-117 is the Pros-phosphohistidine intermediate of the active site.

Belongs to the NDK family. As to quaternary structure, homotetramer. Requires Mg(2+) as cofactor.

The protein resides in the cytoplasm. It carries out the reaction a 2'-deoxyribonucleoside 5'-diphosphate + ATP = a 2'-deoxyribonucleoside 5'-triphosphate + ADP. It catalyses the reaction a ribonucleoside 5'-diphosphate + ATP = a ribonucleoside 5'-triphosphate + ADP. In terms of biological role, major role in the synthesis of nucleoside triphosphates other than ATP. The ATP gamma phosphate is transferred to the NDP beta phosphate via a ping-pong mechanism, using a phosphorylated active-site intermediate. This chain is Nucleoside diphosphate kinase, found in Mycobacterium avium (strain 104).